The chain runs to 365 residues: tRNA-specific 2-thiouridylase MnmA (365 aa).

ATP is bound by residues 14 to 21 and L40; that span reads AMSGGVDS. The active-site Nucleophile is C108. C108 and C204 are joined by a disulfide. G132 serves as a coordination point for ATP. The interaction with tRNA stretch occupies residues 154 to 156; the sequence is KDQ. C204 functions as the Cysteine persulfide intermediate in the catalytic mechanism.

It belongs to the MnmA/TRMU family.

It localises to the cytoplasm. It carries out the reaction S-sulfanyl-L-cysteinyl-[protein] + uridine(34) in tRNA + AH2 + ATP = 2-thiouridine(34) in tRNA + L-cysteinyl-[protein] + A + AMP + diphosphate + H(+). Catalyzes the 2-thiolation of uridine at the wobble position (U34) of tRNA, leading to the formation of s(2)U34. The protein is tRNA-specific 2-thiouridylase MnmA of Rickettsia peacockii (strain Rustic).